Consider the following 362-residue polypeptide: Methylthioribose-1-phosphate isomerase (362 aa).

Substrate is bound by residues 53-55 (RGA), Arg-90, and Gln-201. Asp-241 functions as the Proton donor in the catalytic mechanism. 251–252 (NK) lines the substrate pocket.

This sequence belongs to the eIF-2B alpha/beta/delta subunits family. MtnA subfamily.

It catalyses the reaction 5-(methylsulfanyl)-alpha-D-ribose 1-phosphate = 5-(methylsulfanyl)-D-ribulose 1-phosphate. Its pathway is amino-acid biosynthesis; L-methionine biosynthesis via salvage pathway; L-methionine from S-methyl-5-thio-alpha-D-ribose 1-phosphate: step 1/6. Functionally, catalyzes the interconversion of methylthioribose-1-phosphate (MTR-1-P) into methylthioribulose-1-phosphate (MTRu-1-P). In Dechloromonas aromatica (strain RCB), this protein is Methylthioribose-1-phosphate isomerase.